The following is a 491-amino-acid chain: Glutamyl-tRNA(Gln) amidotransferase subunit A (491 aa).

Residues lysine 80 and serine 155 each act as charge relay system in the active site. Serine 179 acts as the Acyl-ester intermediate in catalysis.

Belongs to the amidase family. GatA subfamily. As to quaternary structure, heterotrimer of A, B and C subunits.

The catalysed reaction is L-glutamyl-tRNA(Gln) + L-glutamine + ATP + H2O = L-glutaminyl-tRNA(Gln) + L-glutamate + ADP + phosphate + H(+). Its function is as follows. Allows the formation of correctly charged Gln-tRNA(Gln) through the transamidation of misacylated Glu-tRNA(Gln) in organisms which lack glutaminyl-tRNA synthetase. The reaction takes place in the presence of glutamine and ATP through an activated gamma-phospho-Glu-tRNA(Gln). This chain is Glutamyl-tRNA(Gln) amidotransferase subunit A, found in Salinispora tropica (strain ATCC BAA-916 / DSM 44818 / JCM 13857 / NBRC 105044 / CNB-440).